A 140-amino-acid polypeptide reads, in one-letter code: Chromatin accessibility complex 16kD protein (140 aa).

Residues 111–140 (LNRSAGSDDDDDDDDDDDEEESESESESDE) form a disordered region. Positions 117-140 (SDDDDDDDDDDDEEESESESESDE) are enriched in acidic residues.

As to quaternary structure, component of the chromatin accessibility complex (CHRAC), composed of Chrac-14, Chrac-16, Acf and Iswi. Forms a heterodimer with Chrac-14. The Chrac-14/Chrac-16 heterodimer interacts with Acf (via N-terminus). Stabilizes the interaction between Chrac-14 and Iswi.

Its subcellular location is the nucleus. In terms of biological role, histone-like protein which promotes nucleosome sliding of ATP-dependent nucleosome remodeling complexes. Part of the chromatin-accessibility complex (CHRAC) which uses energy/ATP to increase the general accessibility of DNA in chromatin. As a heterodimer with Chrac-14, binds DNA and facilitates nucleosome sliding by Acf. As part of the CHRAC complex, required for oogenesis. This is Chromatin accessibility complex 16kD protein from Drosophila melanogaster (Fruit fly).